The sequence spans 435 residues: ATP-dependent protease ATPase subunit HslU (435 aa).

ATP-binding positions include I18, G60–E65, D248, E313, and R385.

The protein belongs to the ClpX chaperone family. HslU subfamily. As to quaternary structure, a double ring-shaped homohexamer of HslV is capped on each side by a ring-shaped HslU homohexamer. The assembly of the HslU/HslV complex is dependent on binding of ATP.

Its subcellular location is the cytoplasm. In terms of biological role, ATPase subunit of a proteasome-like degradation complex; this subunit has chaperone activity. The binding of ATP and its subsequent hydrolysis by HslU are essential for unfolding of protein substrates subsequently hydrolyzed by HslV. HslU recognizes the N-terminal part of its protein substrates and unfolds these before they are guided to HslV for hydrolysis. In Allorhizobium ampelinum (strain ATCC BAA-846 / DSM 112012 / S4) (Agrobacterium vitis (strain S4)), this protein is ATP-dependent protease ATPase subunit HslU.